Consider the following 140-residue polypeptide: Nucleoside diphosphate kinase (140 aa).

K11, F59, R87, T93, R104, and N114 together coordinate ATP. The active-site Pros-phosphohistidine intermediate is the H117.

This sequence belongs to the NDK family. As to quaternary structure, homotetramer. It depends on Mg(2+) as a cofactor.

It localises to the cytoplasm. It carries out the reaction a 2'-deoxyribonucleoside 5'-diphosphate + ATP = a 2'-deoxyribonucleoside 5'-triphosphate + ADP. The enzyme catalyses a ribonucleoside 5'-diphosphate + ATP = a ribonucleoside 5'-triphosphate + ADP. Functionally, major role in the synthesis of nucleoside triphosphates other than ATP. The ATP gamma phosphate is transferred to the NDP beta phosphate via a ping-pong mechanism, using a phosphorylated active-site intermediate. This is Nucleoside diphosphate kinase from Methylocella silvestris (strain DSM 15510 / CIP 108128 / LMG 27833 / NCIMB 13906 / BL2).